Reading from the N-terminus, the 350-residue chain is MRPYDIAKPFLFSLPAETANKSVHRLLETVDGTRVADVMADRYTVADERLAVEAFGHTFDNPVGVAAGFDKNATIPETLASLGFGFAEVGGVTAEPQAGNARPRMFRLKADEAIINRMGLNNDGAIVIGERLKNVDAPFPVGVNIAKTEHVGTNEAPDDYRTTYEHVAEGGDFFVVNVSCPNSEGFEELQNRDAMEAILSELQDAGAAPLLVKLSPDLPEPAVEDALDLVTELDLDGVVATNTTTERPASLRSPNAVETGGLSGKPIENQATEMVRFVAERVDVPVVGVGGVSTAEGAYRKIRAGASLVQLYTGLVYRGPSIAREINSGLRDLLAEDGFDSVEDAVGADL.

Residues 67–71 (AGFDK) and glycine 91 contribute to the FMN site. Lysine 71 contributes to the substrate binding site. 116–120 (NRMGL) serves as a coordination point for substrate. FMN contacts are provided by asparagine 144 and asparagine 177. Substrate is bound at residue asparagine 177. Cysteine 180 (nucleophile) is an active-site residue. Asparagine 182 is a binding site for substrate. Residues lysine 213 and threonine 241 each contribute to the FMN site. 242–243 (NT) is a substrate binding site. The interval 245-265 (TERPASLRSPNAVETGGLSGK) is disordered. FMN-binding positions include glycine 264, glycine 291, and 312-313 (YT).

Belongs to the dihydroorotate dehydrogenase family. Type 2 subfamily. In terms of assembly, monomer. FMN is required as a cofactor.

The protein localises to the cell membrane. It catalyses the reaction (S)-dihydroorotate + a quinone = orotate + a quinol. Its pathway is pyrimidine metabolism; UMP biosynthesis via de novo pathway; orotate from (S)-dihydroorotate (quinone route): step 1/1. Catalyzes the conversion of dihydroorotate to orotate with quinone as electron acceptor. This is Dihydroorotate dehydrogenase (quinone) (pyrD) from Haloarcula marismortui (strain ATCC 43049 / DSM 3752 / JCM 8966 / VKM B-1809) (Halobacterium marismortui).